We begin with the raw amino-acid sequence, 260 residues long: Snake venom serine protease KN5 (260 aa).

A signal peptide spans 1 to 18; that stretch reads MVLIRVLANLLILQLSYA. Residues 19–24 constitute a propeptide that is removed on maturation; the sequence is QKSSEL. The 227-residue stretch at 25 to 251 folds into the Peptidase S1 domain; sequence VIGGDECNIN…HLDWIQSIIA (227 aa). Cystine bridges form between Cys-31–Cys-165, Cys-100–Cys-258, Cys-144–Cys-212, Cys-176–Cys-191, and Cys-202–Cys-227. His-67 functions as the Charge relay system in the catalytic mechanism. Asn-105 carries N-linked (GlcNAc...) asparagine glycosylation. The active-site Charge relay system is the Asp-112. Residues Asn-124 and Asn-172 are each glycosylated (N-linked (GlcNAc...) asparagine). Ser-206 serves as the catalytic Charge relay system. Asn-213 and Asn-255 each carry an N-linked (GlcNAc...) asparagine glycan.

This sequence belongs to the peptidase S1 family. Snake venom subfamily. As to quaternary structure, monomer. As to expression, expressed by the venom gland.

It is found in the secreted. Snake venom serine protease that may act in the hemostasis system of the prey. This is Snake venom serine protease KN5 from Trimeresurus stejnegeri (Chinese green tree viper).